A 1114-amino-acid chain; its full sequence is Extracellular sulfatase SULF-1 homolog (1114 aa).

The N-terminal stretch at 1–25 is a signal peptide; it reads MMRHSSLRLIIGGLILLLFVLNVFS. Ca(2+)-binding residues include D62, D63, and C98. The active-site Nucleophile is C98. The residue at position 98 (C98) is a 3-oxoalanine (Cys). N122, N159, N181, N208, and N251 each carry an N-linked (GlcNAc...) asparagine glycan. Ca(2+) contacts are provided by D327 and H328. Residue N447 is glycosylated (N-linked (GlcNAc...) asparagine). Residues 466–479 show a composition bias toward low complexity; the sequence is SSSSTAATLMSSTA. The disordered stretch occupies residues 466-504; it reads SSSSTAATLMSSTAQQPEDGEEEVETDNEEDDVDGDGAM. Positions 483–502 are enriched in acidic residues; sequence EDGEEEVETDNEEDDVDGDG. N-linked (GlcNAc...) asparagine glycosylation is found at N683, N713, and N743. The interval 781 to 812 is disordered; sequence KQLRESNKQALAAGRRNDNRRRNDQSVLDSGA. The segment covering 795–804 has biased composition (basic and acidic residues); sequence RRNDNRRRND. N-linked (GlcNAc...) asparagine glycosylation occurs at N817. The span at 876-895 shows a compositional bias: basic and acidic residues; that stretch reads ADSKEMAREARRKLKEERQR. Residues 876 to 901 are disordered; the sequence is ADSKEMAREARRKLKEERQRKKERKR. N945, N955, and N974 each carry an N-linked (GlcNAc...) asparagine glycan. Positions 1073-1114 are disordered; it reads LSKYNRLTGSQQSHMKRRPWKQTPLQQSPRFLRTHSVTPAQA. Polar residues predominate over residues 1095–1114; the sequence is TPLQQSPRFLRTHSVTPAQA.

It belongs to the sulfatase family. The cofactor is Ca(2+). Post-translationally, the conversion to 3-oxoalanine (also known as C-formylglycine, FGly), of a serine or cysteine residue in prokaryotes and of a cysteine residue in eukaryotes, is critical for catalytic activity.

It is found in the endoplasmic reticulum. Its subcellular location is the golgi apparatus. The protein localises to the golgi stack. It localises to the cell surface. The chain is Extracellular sulfatase SULF-1 homolog (Sulf1) from Drosophila melanogaster (Fruit fly).